The sequence spans 294 residues: Ribosomal protein L11 methyltransferase (294 aa).

S-adenosyl-L-methionine-binding residues include Thr144, Gly165, Asp187, and Asn229.

It belongs to the methyltransferase superfamily. PrmA family.

The protein resides in the cytoplasm. It catalyses the reaction L-lysyl-[protein] + 3 S-adenosyl-L-methionine = N(6),N(6),N(6)-trimethyl-L-lysyl-[protein] + 3 S-adenosyl-L-homocysteine + 3 H(+). In terms of biological role, methylates ribosomal protein L11. The polypeptide is Ribosomal protein L11 methyltransferase (Pseudomonas aeruginosa (strain LESB58)).